The sequence spans 386 residues: Diaminopimelate decarboxylase (386 aa).

Residue Lys46 is modified to N6-(pyridoxal phosphate)lysine. Residues Gly214 and 246-249 each bind pyridoxal 5'-phosphate; that span reads EIGR. Substrate-binding residues include Arg249, Arg285, and Tyr289. The Proton donor role is filled by Cys314. Residues Glu315 and Tyr343 each contribute to the substrate site. Residue Tyr343 coordinates pyridoxal 5'-phosphate.

Belongs to the Orn/Lys/Arg decarboxylase class-II family. LysA subfamily. As to quaternary structure, homodimer. Pyridoxal 5'-phosphate is required as a cofactor.

It carries out the reaction meso-2,6-diaminopimelate + H(+) = L-lysine + CO2. It participates in amino-acid biosynthesis; L-lysine biosynthesis via DAP pathway; L-lysine from DL-2,6-diaminopimelate: step 1/1. In terms of biological role, specifically catalyzes the decarboxylation of meso-diaminopimelate (meso-DAP) to L-lysine. This Thermotoga maritima (strain ATCC 43589 / DSM 3109 / JCM 10099 / NBRC 100826 / MSB8) protein is Diaminopimelate decarboxylase.